The following is a 152-amino-acid chain: Superoxide dismutase [Cu-Zn] (152 aa).

The Cu cation site is built by histidine 45, histidine 47, and histidine 62. The cysteines at positions 56 and 145 are disulfide-linked. Residues histidine 62, histidine 70, histidine 79, and aspartate 82 each coordinate Zn(2+). Histidine 119 contacts Cu cation.

Belongs to the Cu-Zn superoxide dismutase family. Homodimer. The cofactor is Cu cation. Requires Zn(2+) as cofactor.

It localises to the cytoplasm. It carries out the reaction 2 superoxide + 2 H(+) = H2O2 + O2. In terms of biological role, destroys radicals which are normally produced within the cells and which are toxic to biological systems. The sequence is that of Superoxide dismutase [Cu-Zn] (SODCC) from Pisum sativum (Garden pea).